Consider the following 383-residue polypeptide: Transcription termination factor Rho (383 aa).

Residues 1 to 22 form a disordered region; sequence MTIETTTKKRPRAARPPRPRES. The segment covering 8 to 17 has biased composition (basic residues); that stretch reads KKRPRAARPP. Residues 26 to 93 form the Rho RNA-BD domain; the sequence is LETVAGLLDV…AEVESVNGST (68 aa). ATP is bound by residues 132–137, 144–149, and Arg-175; these read GKGQRG and KAGKTM.

The protein belongs to the Rho family. Homohexamer. The homohexamer assembles into an open ring structure.

In terms of biological role, facilitates transcription termination by a mechanism that involves Rho binding to the nascent RNA, activation of Rho's RNA-dependent ATPase activity, and release of the mRNA from the DNA template. The protein is Transcription termination factor Rho of Streptosporangium roseum (strain ATCC 12428 / DSM 43021 / JCM 3005 / KCTC 9067 / NCIMB 10171 / NRRL 2505 / NI 9100).